The chain runs to 37 residues: Large ribosomal subunit protein bL36 (37 aa).

Belongs to the bacterial ribosomal protein bL36 family.

The sequence is that of Large ribosomal subunit protein bL36 from Vesicomyosocius okutanii subsp. Calyptogena okutanii (strain HA).